Consider the following 2034-residue polypeptide: Sperm vesicle fusion protein fer-1 (2034 aa).

The interval 1-80 (MTVKEKLLKV…GGSDIELLPD (80 aa)) is disordered. Topologically, residues 1–1998 (MTVKEKLLKV…CIKYFWHYYG (1998 aa)) are cytoplasmic. The span at 66–79 (ELSDDGGSDIELLP) shows a compositional bias: acidic residues. 4 consecutive C2 domains span residues 229–367 (RIDE…YLPT), 954–1082 (DSED…PQWF), 1120–1246 (YKER…KSDH), and 1363–1484 (KKGK…ATGG). The disordered stretch occupies residues 1563-1619 (QKAGKENFSDGSDQQNEDVSDGSWDEEDLEREKEKLKWEKHRSKGKPLKKVTTEKAE). Over residues 1577-1591 (QNEDVSDGSWDEEDL) the composition is skewed to acidic residues. Basic residues predominate over residues 1600–1611 (WEKHRSKGKPLK). The C2 5 domain occupies 1684 to 1831 (EYGAIPAPFN…EGIGSPSDVG (148 aa)). The tract at residues 1953–1972 (QEPAGKKRSEPNHSPFLEKP) is disordered. Residues 1999 to 2019 (LQILLWLIIIVILILTIFVLL) form a helical membrane-spanning segment. Residues 2020-2034 (HTWPTILAEIIKAIF) lie on the Extracellular side of the membrane.

It belongs to the ferlin family. Exclusively expressed in the testis.

Its subcellular location is the membrane. Functionally, required for the fusion of the membranous organelles (MOs) with the plasma membrane, a process essential in spermiogenesis. The polypeptide is Sperm vesicle fusion protein fer-1 (fer-1) (Caenorhabditis elegans).